The sequence spans 278 residues: Tryptophan synthase alpha chain (278 aa).

Residues glutamate 50 and aspartate 61 each act as proton acceptor in the active site.

It belongs to the TrpA family. In terms of assembly, tetramer of two alpha and two beta chains.

It carries out the reaction (1S,2R)-1-C-(indol-3-yl)glycerol 3-phosphate + L-serine = D-glyceraldehyde 3-phosphate + L-tryptophan + H2O. It functions in the pathway amino-acid biosynthesis; L-tryptophan biosynthesis; L-tryptophan from chorismate: step 5/5. Functionally, the alpha subunit is responsible for the aldol cleavage of indoleglycerol phosphate to indole and glyceraldehyde 3-phosphate. The chain is Tryptophan synthase alpha chain from Rhodopseudomonas palustris (strain HaA2).